Here is a 166-residue protein sequence, read N- to C-terminus: MTWTTPDLCDRYPEVTIAEPPFRHFGGRTVFCGPMVTVRCFEDNSRMRELAATPGDARVLVVDGQGSLKHALLGDQIAANAVANGWAGVLIHGGVRDVEMLASLPLGVLALAACPRRTERRDLGDVDVPVSFAGVPFVPGHWLYADANGVLVSPQPLSLDGASGSI.

Residues 74-77 (GDQI) and R96 each bind substrate. An a divalent metal cation-binding site is contributed by D97.

This sequence belongs to the class II aldolase/RraA-like family. In terms of assembly, homotrimer. It depends on a divalent metal cation as a cofactor.

The catalysed reaction is 4-hydroxy-4-methyl-2-oxoglutarate = 2 pyruvate. The enzyme catalyses oxaloacetate + H(+) = pyruvate + CO2. Functionally, catalyzes the aldol cleavage of 4-hydroxy-4-methyl-2-oxoglutarate (HMG) into 2 molecules of pyruvate. Also contains a secondary oxaloacetate (OAA) decarboxylase activity due to the common pyruvate enolate transition state formed following C-C bond cleavage in the retro-aldol and decarboxylation reactions. The polypeptide is Putative 4-hydroxy-4-methyl-2-oxoglutarate aldolase (Xanthomonas oryzae pv. oryzae (strain MAFF 311018)).